A 62-amino-acid chain; its full sequence is DNA-directed RNA polymerase subunit Rpo10 (62 aa).

The Zn(2+) site is built by C6, C9, C43, and C44.

The protein belongs to the archaeal Rpo10/eukaryotic RPB10 RNA polymerase subunit family. As to quaternary structure, part of the RNA polymerase complex. The cofactor is Zn(2+).

It localises to the cytoplasm. The enzyme catalyses RNA(n) + a ribonucleoside 5'-triphosphate = RNA(n+1) + diphosphate. Its function is as follows. DNA-dependent RNA polymerase (RNAP) catalyzes the transcription of DNA into RNA using the four ribonucleoside triphosphates as substrates. The sequence is that of DNA-directed RNA polymerase subunit Rpo10 from Methanocorpusculum labreanum (strain ATCC 43576 / DSM 4855 / Z).